An 83-amino-acid polypeptide reads, in one-letter code: Cytochrome b559 subunit alpha (83 aa).

Residues Ile-21–Trp-35 traverse the membrane as a helical segment. His-23 lines the heme pocket.

In terms of assembly, heterodimer of an alpha subunit and a beta subunit. PSII is composed of 1 copy each of membrane proteins PsbA, PsbB, PsbC, PsbD, PsbE, PsbF, PsbH, PsbI, PsbJ, PsbK, PsbL, PsbM, PsbT, PsbX, PsbY, PsbZ, Psb30/Ycf12, at least 3 peripheral proteins of the oxygen-evolving complex and a large number of cofactors. It forms dimeric complexes. Requires heme b as cofactor.

It is found in the plastid. It localises to the chloroplast thylakoid membrane. Its function is as follows. This b-type cytochrome is tightly associated with the reaction center of photosystem II (PSII). PSII is a light-driven water:plastoquinone oxidoreductase that uses light energy to abstract electrons from H(2)O, generating O(2) and a proton gradient subsequently used for ATP formation. It consists of a core antenna complex that captures photons, and an electron transfer chain that converts photonic excitation into a charge separation. The sequence is that of Cytochrome b559 subunit alpha from Pisum sativum (Garden pea).